The following is a 308-amino-acid chain: tRNA dimethylallyltransferase (308 aa).

ATP is bound at residue 10–17 (GPTGVGKT). Substrate is bound at residue 12–17 (TGVGKT). An interaction with substrate tRNA region spans residues 35–38 (DSRQ).

It belongs to the IPP transferase family. As to quaternary structure, monomer. Mg(2+) is required as a cofactor.

The enzyme catalyses adenosine(37) in tRNA + dimethylallyl diphosphate = N(6)-dimethylallyladenosine(37) in tRNA + diphosphate. In terms of biological role, catalyzes the transfer of a dimethylallyl group onto the adenine at position 37 in tRNAs that read codons beginning with uridine, leading to the formation of N6-(dimethylallyl)adenosine (i(6)A). The sequence is that of tRNA dimethylallyltransferase from Fervidobacterium nodosum (strain ATCC 35602 / DSM 5306 / Rt17-B1).